The following is a 362-amino-acid chain: Probable dual-specificity RNA methyltransferase RlmN (362 aa).

Catalysis depends on Glu-105, which acts as the Proton acceptor. In terms of domain architecture, Radical SAM core spans 111–344; sequence HEYGNSICVT…VTIRREQGHD (234 aa). Cys-118 and Cys-349 form a disulfide bridge. Residues Cys-125, Cys-129, and Cys-132 each coordinate [4Fe-4S] cluster. Residues 175–176, Ser-207, 230–232, and Asn-306 each bind S-adenosyl-L-methionine; these read GE and SLH. Catalysis depends on Cys-349, which acts as the S-methylcysteine intermediate.

It belongs to the radical SAM superfamily. RlmN family. Requires [4Fe-4S] cluster as cofactor.

Its subcellular location is the cytoplasm. The catalysed reaction is adenosine(2503) in 23S rRNA + 2 reduced [2Fe-2S]-[ferredoxin] + 2 S-adenosyl-L-methionine = 2-methyladenosine(2503) in 23S rRNA + 5'-deoxyadenosine + L-methionine + 2 oxidized [2Fe-2S]-[ferredoxin] + S-adenosyl-L-homocysteine. It carries out the reaction adenosine(37) in tRNA + 2 reduced [2Fe-2S]-[ferredoxin] + 2 S-adenosyl-L-methionine = 2-methyladenosine(37) in tRNA + 5'-deoxyadenosine + L-methionine + 2 oxidized [2Fe-2S]-[ferredoxin] + S-adenosyl-L-homocysteine. Specifically methylates position 2 of adenine 2503 in 23S rRNA and position 2 of adenine 37 in tRNAs. The chain is Probable dual-specificity RNA methyltransferase RlmN from Bacillus mycoides (strain KBAB4) (Bacillus weihenstephanensis).